The following is a 413-amino-acid chain: Ribulose bisphosphate carboxylase/oxygenase activase, chloroplastic (413 aa).

The N-terminal 54 residues, 1 to 54 (MAATVSTIGAVNRTTLNNSNYGGLVPNSAFLGSRLKVSSRFTTSKMVTGNFKIV), are a transit peptide targeting the chloroplast. Position 162-169 (162-169 (GGKGQGKS)) interacts with ATP.

Belongs to the RuBisCO activase family.

The protein localises to the plastid. The protein resides in the chloroplast stroma. In terms of biological role, activation of RuBisCO (ribulose-1,5-bisphosphate carboxylase/oxygenase; EC 4.1.1.39) involves the ATP-dependent carboxylation of the epsilon-amino group of lysine leading to a carbamate structure. This chain is Ribulose bisphosphate carboxylase/oxygenase activase, chloroplastic, found in Cucumis sativus (Cucumber).